The primary structure comprises 442 residues: Tryptophan synthase beta chain 2 (442 aa).

N6-(pyridoxal phosphate)lysine is present on lysine 122.

Belongs to the TrpB family. In terms of assembly, tetramer of two alpha and two beta chains. Requires pyridoxal 5'-phosphate as cofactor.

It catalyses the reaction (1S,2R)-1-C-(indol-3-yl)glycerol 3-phosphate + L-serine = D-glyceraldehyde 3-phosphate + L-tryptophan + H2O. The protein operates within amino-acid biosynthesis; L-tryptophan biosynthesis; L-tryptophan from chorismate: step 5/5. Its function is as follows. The beta subunit is responsible for the synthesis of L-tryptophan from indole and L-serine. This is Tryptophan synthase beta chain 2 (trpB2) from Methanosarcina mazei (strain ATCC BAA-159 / DSM 3647 / Goe1 / Go1 / JCM 11833 / OCM 88) (Methanosarcina frisia).